We begin with the raw amino-acid sequence, 497 residues long: Lysine--tRNA ligase (497 aa).

Mg(2+) contacts are provided by glutamate 409 and glutamate 416.

Belongs to the class-II aminoacyl-tRNA synthetase family. As to quaternary structure, homodimer. Mg(2+) serves as cofactor.

Its subcellular location is the cytoplasm. It catalyses the reaction tRNA(Lys) + L-lysine + ATP = L-lysyl-tRNA(Lys) + AMP + diphosphate. The polypeptide is Lysine--tRNA ligase (Streptococcus pyogenes serotype M6 (strain ATCC BAA-946 / MGAS10394)).